Reading from the N-terminus, the 369-residue chain is 4-hydroxy-3-methylbut-2-en-1-yl diphosphate synthase (flavodoxin) (369 aa).

The [4Fe-4S] cluster site is built by C268, C271, C303, and E310.

Belongs to the IspG family. Requires [4Fe-4S] cluster as cofactor.

It catalyses the reaction (2E)-4-hydroxy-3-methylbut-2-enyl diphosphate + oxidized [flavodoxin] + H2O + 2 H(+) = 2-C-methyl-D-erythritol 2,4-cyclic diphosphate + reduced [flavodoxin]. The protein operates within isoprenoid biosynthesis; isopentenyl diphosphate biosynthesis via DXP pathway; isopentenyl diphosphate from 1-deoxy-D-xylulose 5-phosphate: step 5/6. Functionally, converts 2C-methyl-D-erythritol 2,4-cyclodiphosphate (ME-2,4cPP) into 1-hydroxy-2-methyl-2-(E)-butenyl 4-diphosphate. The chain is 4-hydroxy-3-methylbut-2-en-1-yl diphosphate synthase (flavodoxin) from Exiguobacterium sibiricum (strain DSM 17290 / CCUG 55495 / CIP 109462 / JCM 13490 / 255-15).